We begin with the raw amino-acid sequence, 778 residues long: General transcription and DNA repair factor IIH helicase subunit XPD/RAD3 (778 aa).

The Helicase ATP-binding domain occupies 7 to 285 (DLPVLFPYPK…KVDSQKLQDE (279 aa)). 42 to 49 (MPSGTGKT) provides a ligand contact to ATP. [4Fe-4S] cluster-binding residues include cysteine 115, cysteine 133, cysteine 156, and cysteine 191. Residues 235-238 (DEAH) carry the DEAH box motif. The segment covering 750 to 765 (SRKDQGGFIENENKEG) has biased composition (basic and acidic residues). The interval 750–778 (SRKDQGGFIENENKEGEQDEDEDEDIEMQ) is disordered. A compositionally biased stretch (acidic residues) spans 766 to 778 (EQDEDEDEDIEMQ).

Belongs to the helicase family. RAD3/XPD subfamily. As to quaternary structure, component of the 7-subunit TFIIH core complex composed of XPB/SSL2, XPD/RAD3, SSL1, TFB1, TFB2, TFB4 and TFB5, which is active in NER. The core complex associates with the 3-subunit CTD-kinase module TFIIK composed of CCL1, KIN28 and TFB3 to form the 10-subunit holoenzyme (holo-TFIIH) active in transcription. An additionnal subunit, TFB6, plays a role in the dissociation of the SSL2 helicase from TFIIH after transcription initiation. [4Fe-4S] cluster serves as cofactor. The cofactor is Mg(2+).

Its subcellular location is the nucleus. It carries out the reaction Couples ATP hydrolysis with the unwinding of duplex DNA at the replication fork by translocating in the 5'-3' direction. This creates two antiparallel DNA single strands (ssDNA). The leading ssDNA polymer is the template for DNA polymerase III holoenzyme which synthesizes a continuous strand.. The enzyme catalyses ATP + H2O = ADP + phosphate + H(+). Its function is as follows. ATP-dependent 5'-3' DNA helicase. Component of the general transcription and DNA repair factor IIH (TFIIH) core complex, which is involved in general and transcription-coupled nucleotide excision repair (NER) of damaged DNA and, when complexed to TFIIK, in RNA transcription by RNA polymerase II. In NER, TFIIH acts by opening DNA around the lesion to allow the excision of the damaged oligonucleotide and its replacement by a new DNA fragment. The ATP-dependent helicase activity of XPD/RAD3 is required for DNA opening. In transcription, TFIIH has an essential role in transcription initiation. When the pre-initiation complex (PIC) has been established, TFIIH is required for promoter opening and promoter escape. Phosphorylation of the C-terminal tail (CTD) of the largest subunit of RNA polymerase II by the kinase module TFIIK controls the initiation of transcription. XPD/RAD3 acts by forming a bridge between TFIIK and the core-TFIIH complex. Involved in the maintenance of the fidelity of DNA replication. Has single-stranded DNA-dependent ATPase activity. 5'-3' DNA helicase activity requires ATP (dATP partially substitutes), will unwind over 800 bp dsDNA. Able to unwind an RNA:DNA hybrid. This is General transcription and DNA repair factor IIH helicase subunit XPD/RAD3 from Saccharomyces cerevisiae (strain ATCC 204508 / S288c) (Baker's yeast).